The following is a 221-amino-acid chain: Elongation factor Ts (221 aa).

Residues 82–85 (TDFV) form an involved in Mg(2+) ion dislocation from EF-Tu region.

Belongs to the EF-Ts family.

The protein resides in the cytoplasm. In terms of biological role, associates with the EF-Tu.GDP complex and induces the exchange of GDP to GTP. It remains bound to the aminoacyl-tRNA.EF-Tu.GTP complex up to the GTP hydrolysis stage on the ribosome. In Synechococcus elongatus (strain ATCC 33912 / PCC 7942 / FACHB-805) (Anacystis nidulans R2), this protein is Elongation factor Ts.